We begin with the raw amino-acid sequence, 173 residues long: MNKNCISASWRCDERTARQVCSADDSDKMADCCKRPEDFQCPINKTAKLDFKELRYATKVPQTPVDTVFPETTANRVEIDAKTIQLLERLSLVNLDSEQALATLNSSIQFADKIAHINTENVRPLYTVLENQQLQLRNDEVKEGDCRVELLRNAKVTDEDYYVSPPGNIPLEQ.

The protein belongs to the GatC family. As to quaternary structure, subunit of the heterotrimeric GatCAB amidotransferase (AdT) complex, composed of A, B and C subunits.

The protein resides in the mitochondrion. It catalyses the reaction L-glutamyl-tRNA(Gln) + L-glutamine + ATP + H2O = L-glutaminyl-tRNA(Gln) + L-glutamate + ADP + phosphate + H(+). Allows the formation of correctly charged Gln-tRNA(Gln) through the transamidation of misacylated Glu-tRNA(Gln) in the mitochondria. The reaction takes place in the presence of glutamine and ATP through an activated gamma-phospho-Glu-tRNA(Gln). This chain is Glutamyl-tRNA(Gln) amidotransferase subunit C, mitochondrial, found in Drosophila persimilis (Fruit fly).